Reading from the N-terminus, the 475-residue chain is Bifunctional protein HldE (475 aa).

The tract at residues 1 to 318 (MMQYSPKFNN…ENAIHHREET (318 aa)) is ribokinase. 195-198 (NMSE) contributes to the ATP binding site. Residue aspartate 264 is part of the active site. Residues 344-475 (MTNGCFDILH…NVIKKIQASK (132 aa)) form a cytidylyltransferase region.

In the N-terminal section; belongs to the carbohydrate kinase PfkB family. The protein in the C-terminal section; belongs to the cytidylyltransferase family. Homodimer.

It carries out the reaction D-glycero-beta-D-manno-heptose 7-phosphate + ATP = D-glycero-beta-D-manno-heptose 1,7-bisphosphate + ADP + H(+). It catalyses the reaction D-glycero-beta-D-manno-heptose 1-phosphate + ATP + H(+) = ADP-D-glycero-beta-D-manno-heptose + diphosphate. It functions in the pathway nucleotide-sugar biosynthesis; ADP-L-glycero-beta-D-manno-heptose biosynthesis; ADP-L-glycero-beta-D-manno-heptose from D-glycero-beta-D-manno-heptose 7-phosphate: step 1/4. Its pathway is nucleotide-sugar biosynthesis; ADP-L-glycero-beta-D-manno-heptose biosynthesis; ADP-L-glycero-beta-D-manno-heptose from D-glycero-beta-D-manno-heptose 7-phosphate: step 3/4. Its function is as follows. Catalyzes the phosphorylation of D-glycero-D-manno-heptose 7-phosphate at the C-1 position to selectively form D-glycero-beta-D-manno-heptose-1,7-bisphosphate. In terms of biological role, catalyzes the ADP transfer from ATP to D-glycero-beta-D-manno-heptose 1-phosphate, yielding ADP-D-glycero-beta-D-manno-heptose. This is Bifunctional protein HldE from Actinobacillus pleuropneumoniae serotype 5b (strain L20).